We begin with the raw amino-acid sequence, 195 residues long: ADP-ribosylation factor L (195 aa).

Gly2 is lipidated: N-myristoyl glycine. GTP is bound by residues 25–32 (GLENSGKT), 72–76 (DLLYP), and 131–134 (NKQD).

It belongs to the small GTPase superfamily. Arf family.

Functionally, may be involved in trafficking events within the endosomal system. This Dictyostelium discoideum (Social amoeba) protein is ADP-ribosylation factor L (arrL).